The chain runs to 329 residues: Glycerol-3-phosphate dehydrogenase [NAD(P)+] (329 aa).

The NADPH site is built by Trp-15, His-35, and Lys-107. Lys-107, Gly-135, and Ser-137 together coordinate sn-glycerol 3-phosphate. Ala-139 is an NADPH binding site. Positions 190, 243, 253, 254, and 255 each coordinate sn-glycerol 3-phosphate. Lys-190 serves as the catalytic Proton acceptor. Arg-254 contacts NADPH. Residues Leu-276 and Glu-278 each contribute to the NADPH site.

Belongs to the NAD-dependent glycerol-3-phosphate dehydrogenase family.

The protein localises to the cytoplasm. The enzyme catalyses sn-glycerol 3-phosphate + NAD(+) = dihydroxyacetone phosphate + NADH + H(+). It catalyses the reaction sn-glycerol 3-phosphate + NADP(+) = dihydroxyacetone phosphate + NADPH + H(+). It functions in the pathway membrane lipid metabolism; glycerophospholipid metabolism. Its function is as follows. Catalyzes the reduction of the glycolytic intermediate dihydroxyacetone phosphate (DHAP) to sn-glycerol 3-phosphate (G3P), the key precursor for phospholipid synthesis. This Rhodopseudomonas palustris (strain TIE-1) protein is Glycerol-3-phosphate dehydrogenase [NAD(P)+].